Consider the following 648-residue polypeptide: Protein kinase YegI (648 aa).

The Protein kinase domain maps to 15 to 302 (TTLGRELGKG…KAWVAALDSL (288 aa)). Residues 21–29 (LGKGGEGAV) and Lys-41 contribute to the ATP site. Asp-143 (proton acceptor) is an active-site residue.

In terms of processing, autophosphorylated. Dephosphorylated by PphC.

In terms of biological role, probable serine/threonine kinase. The sequence is that of Protein kinase YegI (yegI) from Escherichia coli (strain K12).